The primary structure comprises 415 residues: Tyrosine--tRNA ligase (415 aa).

Residue tyrosine 34 coordinates L-tyrosine. The 'HIGH' region signature appears at 39-48 (PTADSLHLGH). The L-tyrosine site is built by tyrosine 164 and glutamine 168. The 'KMSKS' region motif lies at 226–230 (KFGKS). Residue lysine 229 coordinates ATP. Residues 348 to 415 (KNVVDFLVDG…KKKYFLGKVK (68 aa)) enclose the S4 RNA-binding domain.

The protein belongs to the class-I aminoacyl-tRNA synthetase family. TyrS type 1 subfamily. In terms of assembly, homodimer.

It localises to the cytoplasm. The catalysed reaction is tRNA(Tyr) + L-tyrosine + ATP = L-tyrosyl-tRNA(Tyr) + AMP + diphosphate + H(+). Functionally, catalyzes the attachment of tyrosine to tRNA(Tyr) in a two-step reaction: tyrosine is first activated by ATP to form Tyr-AMP and then transferred to the acceptor end of tRNA(Tyr). This is Tyrosine--tRNA ligase from Leuconostoc mesenteroides subsp. mesenteroides (strain ATCC 8293 / DSM 20343 / BCRC 11652 / CCM 1803 / JCM 6124 / NCDO 523 / NBRC 100496 / NCIMB 8023 / NCTC 12954 / NRRL B-1118 / 37Y).